A 186-amino-acid polypeptide reads, in one-letter code: Peptidyl-tRNA hydrolase (186 aa).

Tyr14 is a tRNA binding site. The Proton acceptor role is filled by His19. Residues Tyr61, Asn63, and Asn107 each coordinate tRNA.

The protein belongs to the PTH family. In terms of assembly, monomer.

It localises to the cytoplasm. The catalysed reaction is an N-acyl-L-alpha-aminoacyl-tRNA + H2O = an N-acyl-L-amino acid + a tRNA + H(+). Its function is as follows. Hydrolyzes ribosome-free peptidyl-tRNAs (with 1 or more amino acids incorporated), which drop off the ribosome during protein synthesis, or as a result of ribosome stalling. Catalyzes the release of premature peptidyl moieties from peptidyl-tRNA molecules trapped in stalled 50S ribosomal subunits, and thus maintains levels of free tRNAs and 50S ribosomes. The polypeptide is Peptidyl-tRNA hydrolase (Helicobacter pylori (strain J99 / ATCC 700824) (Campylobacter pylori J99)).